A 92-amino-acid chain; its full sequence is Small ribosomal subunit protein uS19 (92 aa).

Belongs to the universal ribosomal protein uS19 family.

In terms of biological role, protein S19 forms a complex with S13 that binds strongly to the 16S ribosomal RNA. The chain is Small ribosomal subunit protein uS19 from Polaromonas naphthalenivorans (strain CJ2).